The sequence spans 346 residues: Formimidoylglutamase (346 aa).

Residues His145, Asp180, His182, Asp184, Asp271, and Asp273 each coordinate Mn(2+).

This sequence belongs to the arginase family. Mn(2+) serves as cofactor.

It catalyses the reaction N-formimidoyl-L-glutamate + H2O = formamide + L-glutamate. Its pathway is amino-acid degradation; L-histidine degradation into L-glutamate; L-glutamate from N-formimidoyl-L-glutamate (hydrolase route): step 1/1. Functionally, catalyzes the conversion of N-formimidoyl-L-glutamate to L-glutamate and formamide. The polypeptide is Formimidoylglutamase (Psychrobacter cryohalolentis (strain ATCC BAA-1226 / DSM 17306 / VKM B-2378 / K5)).